Reading from the N-terminus, the 205-residue chain is Bacterial microcompartment protein trimer-1 (205 aa).

A disordered region spans residues 1-20 (MDHAPERFDATPPAGEPDRP). BMC domains lie at 21–106 (ALGV…RFLD) and 120–204 (SVII…GRLF).

It belongs to the bacterial microcompartments protein family. Homotrimerizes to form a pseudohexamer. Unlike its paralogs BMC-T2 and BMC-T3, the pseudohexamers do not stack. The concave side faces outward, with the N- and C-terminii exposed to the cytoplasm.

Its subcellular location is the bacterial microcompartment. Its function is as follows. A minor component of the bacterial microcompartment (BMC) shell. Expression of 5 proteins in E.coli (BMC-H (Hoch_5815), BMC-P (Hoch_5814), and 3 BMC-T (Hoch_5812, Hoch_5816, Hoch_3341)) forms 40 nm artificial BMCs with a molecular mass of 6.5 MDa. This protein does not form stacked pseudohexamers in the BMC. There are 20 BMC-T pseudohexamers per BMC, composed of mixed BMC-T1, BMC-T2 and BMC-T3. The shell facets are 20-30 Angstroms thick, with 1 of BMC-T trimers protruding to the exterior. This chain is Bacterial microcompartment protein trimer-1, found in Haliangium ochraceum (strain DSM 14365 / JCM 11303 / SMP-2).